Consider the following 212-residue polypeptide: Small ribosomal subunit protein uS4c (212 aa).

The 64-residue stretch at 89–152 (MRLDNIIFRL…RSRALVDKNL (64 aa)) folds into the S4 RNA-binding domain.

Belongs to the universal ribosomal protein uS4 family. As to quaternary structure, part of the 30S ribosomal subunit. Contacts protein S5. The interaction surface between S4 and S5 is involved in control of translational fidelity.

It is found in the plastid. It localises to the chloroplast. Its function is as follows. One of the primary rRNA binding proteins, it binds directly to 16S rRNA where it nucleates assembly of the body of the 30S subunit. Functionally, with S5 and S12 plays an important role in translational accuracy. This Staurastrum punctulatum (Green alga) protein is Small ribosomal subunit protein uS4c (rps4).